Reading from the N-terminus, the 185-residue chain is UPF0397 protein CPF_1836 (185 aa).

5 helical membrane-spanning segments follow: residues 11 to 31, 44 to 64, 71 to 91, 111 to 131, and 149 to 169; these read IVAI…GSLP, AFLA…IGFI, IVFF…VGLI, IFMF…LVAP, and GVIG…ILIA.

The protein belongs to the UPF0397 family.

The protein localises to the cell membrane. The sequence is that of UPF0397 protein CPF_1836 from Clostridium perfringens (strain ATCC 13124 / DSM 756 / JCM 1290 / NCIMB 6125 / NCTC 8237 / Type A).